Consider the following 486-residue polypeptide: LON peptidase N-terminal domain and RING finger protein C14F5.10c (486 aa).

The segment at 169–207 adopts an RING-type zinc-finger fold; sequence CQICFGMLYDPVVSPCGHTFCGPCLMQALTQSPQCPTCR. The Lon N-terminal domain maps to 250 to 472; that stretch reads ESWLPLFISM…LVLIWLTQLQ (223 aa).

The polypeptide is LON peptidase N-terminal domain and RING finger protein C14F5.10c (Schizosaccharomyces pombe (strain 972 / ATCC 24843) (Fission yeast)).